The chain runs to 138 residues: ATP synthase epsilon chain (138 aa).

It belongs to the ATPase epsilon chain family. F-type ATPases have 2 components, CF(1) - the catalytic core - and CF(0) - the membrane proton channel. CF(1) has five subunits: alpha(3), beta(3), gamma(1), delta(1), epsilon(1). CF(0) has three main subunits: a, b and c.

The protein resides in the cell inner membrane. In terms of biological role, produces ATP from ADP in the presence of a proton gradient across the membrane. In Geobacter metallireducens (strain ATCC 53774 / DSM 7210 / GS-15), this protein is ATP synthase epsilon chain.